A 36-amino-acid polypeptide reads, in one-letter code: uncharacterized protein (36 aa).

The helical transmembrane segment at Ser13–Phe35 threads the bilayer.

Its subcellular location is the host membrane. This is an uncharacterized protein from Pseudoalteromonas espejiana (Bacteriophage PM2).